The sequence spans 404 residues: uncharacterized protein (404 aa).

The segment covering 262 to 278 (VSTGDTSPYGTEDSSPA) has biased composition (polar residues). 2 disordered regions span residues 262-307 (VSTG…SPSL) and 320-340 (KKSH…GGAD). A phosphoserine mark is found at S268, S276, and S279. 2 positions are modified to phosphothreonine: T290 and T293. S304, S306, S324, S358, and S362 each carry phosphoserine. Residues 320–336 (KKSHSANDSEEFFREDD) are compositionally biased toward basic and acidic residues.

This is an uncharacterized protein from Rattus norvegicus (Rat).